We begin with the raw amino-acid sequence, 367 residues long: Probable protein phosphatase 2C 57 (367 aa).

Residues 1–29 (MEEHRLGGGGGGGGGGGRPPIPGAAGRKL) form a disordered region. The span at 7-18 (GGGGGGGGGGGR) shows a compositional bias: gly residues. The PPM-type phosphatase domain occupies 67-331 (RSGGWADIGS…DNLSVVVICF (265 aa)). Mn(2+) is bound by residues D111, G112, D279, and D322.

It belongs to the PP2C family. Mg(2+) serves as cofactor. Mn(2+) is required as a cofactor.

The catalysed reaction is O-phospho-L-seryl-[protein] + H2O = L-seryl-[protein] + phosphate. It catalyses the reaction O-phospho-L-threonyl-[protein] + H2O = L-threonyl-[protein] + phosphate. The sequence is that of Probable protein phosphatase 2C 57 from Oryza sativa subsp. japonica (Rice).